Here is a 1350-residue protein sequence, read N- to C-terminus: Protein transport protein SEC16A homolog (1350 aa).

5 disordered regions span residues 26 to 45 (YTPTASSSAKELKFDDGSDS), 73 to 97 (LGNDVANEGTSGSVGKEEPSSSIAP), 964 to 1063 (MPPP…TRKV), 1118 to 1216 (AEEA…KPPI), and 1235 to 1350 (QVME…EVEL). A compositionally biased stretch (basic and acidic residues) spans 35–45 (KELKFDDGSDS). Phosphoserine is present on serine 43. Over residues 970–1002 (HSTTGNPQVNEYQHQQQEAAKLSYSQSANTMSS) the composition is skewed to polar residues. Residues 1150–1168 (SPSSGSWSSGSPTPSENSP) show a composition bias toward low complexity. Composition is skewed to polar residues over residues 1195-1210 (TYNQGSSSMYQSPPVQ) and 1289-1316 (RSGSGTSLNGDLPQSVSRRTASWSGSVN). Over residues 1317–1343 (SSSFMSPTSASTFRPSPLNSSSSSLGE) the composition is skewed to low complexity.

This sequence belongs to the SEC16 family. In terms of assembly, interacts with SEC13A, SEC13B and SEC31A.

The protein resides in the golgi apparatus. It localises to the golgi stack. Its subcellular location is the endoplasmic reticulum. Functionally, required for efficient protein export from the endoplasmic reticulum (ER) to the Golgi by regulating COPII coat dynamics at the ER. Functions as a scaffold and regulator of COPII coat assembly at ER exit sites. This is Protein transport protein SEC16A homolog from Arabidopsis thaliana (Mouse-ear cress).